The sequence spans 932 residues: Probable serine/threonine-protein kinase clkA (932 aa).

Positions 1–10 are enriched in basic residues; it reads MDRFQTKRKT. 3 disordered regions span residues 1-21, 39-198, and 212-562; these read MDRF…NNDY, YKNN…YGDT, and NDYD…TNTN. Low complexity-rich tracts occupy residues 11–21 and 39–123; these read YSYNGYSNNDY and YKNN…ENNY. Polar residues predominate over residues 124-143; it reads FQSENQSNKDQNSYFNSSYL. 4 stretches are compositionally biased toward low complexity: residues 148-196, 218-305, 314-342, and 351-562; these read DNYN…NSYG, NNNN…NGGN, VFNN…NNDY, and NIYS…TNTN. The Protein kinase domain maps to 590-920; the sequence is YKVLCTVGSG…ASDALSHPFL (331 aa). ATP contacts are provided by residues 596 to 604 and Lys619; that span reads VGSGTFSTV. Asp719 functions as the Proton acceptor in the catalytic mechanism.

It belongs to the protein kinase superfamily. CMGC Ser/Thr protein kinase family.

The enzyme catalyses L-seryl-[protein] + ATP = O-phospho-L-seryl-[protein] + ADP + H(+). The catalysed reaction is L-threonyl-[protein] + ATP = O-phospho-L-threonyl-[protein] + ADP + H(+). This is Probable serine/threonine-protein kinase clkA (clkA) from Dictyostelium discoideum (Social amoeba).